The chain runs to 239 residues: Guanylate kinase (239 aa).

The Guanylate kinase-like domain occupies 19 to 197; it reads GLLIVVTGAS…AVSELLAVQQ (179 aa). Residue 26–33 participates in ATP binding; that stretch reads GASGVGKG.

This sequence belongs to the guanylate kinase family.

Its subcellular location is the cytoplasm. The enzyme catalyses GMP + ATP = GDP + ADP. Its function is as follows. Essential for recycling GMP and indirectly, cGMP. This chain is Guanylate kinase (gmk), found in Deinococcus radiodurans (strain ATCC 13939 / DSM 20539 / JCM 16871 / CCUG 27074 / LMG 4051 / NBRC 15346 / NCIMB 9279 / VKM B-1422 / R1).